The following is a 301-amino-acid chain: NADH-cytochrome b5 reductase 3 (301 aa).

G2 carries the N-myristoyl glycine lipid modification. Residues 40–152 (DIKYPLRLID…RGPNGLLVYQ (113 aa)) form the FAD-binding FR-type domain. K42 carries the post-translational modification N6-acetyllysine. At Y43 the chain carries Phosphotyrosine. N6-acetyllysine is present on K50. FAD-binding residues include R92, P93, Y94, V109, K111, and F114. K120 carries the post-translational modification N6-acetyllysine. Residues K126, M127, S128, and T185 each contribute to the FAD site.

The protein belongs to the flavoprotein pyridine nucleotide cytochrome reductase family. Component of a complex composed of cytochrome b5, NADH-cytochrome b5 reductase (CYB5R3) and MTARC2. Interacts with MTLN; the interaction is required to maintain cellular lipid composition and leads to stimulation of mitochondrial respiratory complex I activity. FAD serves as cofactor.

Its subcellular location is the endoplasmic reticulum membrane. The protein localises to the mitochondrion outer membrane. The enzyme catalyses 2 Fe(III)-[cytochrome b5] + NADH = 2 Fe(II)-[cytochrome b5] + NAD(+) + H(+). Catalyzes the reduction of two molecules of cytochrome b5 using NADH as the electron donor. The protein is NADH-cytochrome b5 reductase 3 of Mus musculus (Mouse).